The chain runs to 439 residues: Trigger factor (439 aa).

The PPIase FKBP-type domain occupies 170 to 255; sequence GDTVVIDFDG…IHELKKLETP (86 aa).

Belongs to the FKBP-type PPIase family. Tig subfamily.

It is found in the cytoplasm. It catalyses the reaction [protein]-peptidylproline (omega=180) = [protein]-peptidylproline (omega=0). Functionally, involved in protein export. Acts as a chaperone by maintaining the newly synthesized protein in an open conformation. Functions as a peptidyl-prolyl cis-trans isomerase. The protein is Trigger factor of Oenococcus oeni (strain ATCC BAA-331 / PSU-1).